We begin with the raw amino-acid sequence, 169 residues long: Putative hydrogenase maturation protease MJ0631 (169 aa).

This sequence belongs to the peptidase A31 family.

The protein is Putative hydrogenase maturation protease MJ0631 of Methanocaldococcus jannaschii (strain ATCC 43067 / DSM 2661 / JAL-1 / JCM 10045 / NBRC 100440) (Methanococcus jannaschii).